Here is a 344-residue protein sequence, read N- to C-terminus: Galactinol synthase 1 (344 aa).

The active site involves Lys-111. Mn(2+) contacts are provided by Asp-127, Asp-129, and His-265.

The protein belongs to the glycosyltransferase 8 family. Galactosyltransferase subfamily. The cofactor is a divalent metal cation. Accumulates in mature seeds. Expressed in seedlings (axes and cotyledons), meristems, vascular tissues and emerging lateral roots. Present in abscission zones.

The protein resides in the cytoplasm. The enzyme catalyses myo-inositol + UDP-alpha-D-galactose = alpha-D-galactosyl-(1-&gt;3)-1D-myo-inositol + UDP + H(+). Galactinol synthase involved in the biosynthesis of raffinose family oligosaccharides (RFOs) that function as osmoprotectants. Promotes plant stress tolerance such as heat, chilling, salinity and methylviologen (MV), a superoxide radical generating drug, by mediating raffinose accumulation, an osmoprotective substance. This chain is Galactinol synthase 1 (GOLS1), found in Arabidopsis thaliana (Mouse-ear cress).